Here is a 1050-residue protein sequence, read N- to C-terminus: Diacylglycerol kinase iota (1050 aa).

Disordered regions lie at residues 52–73 and 325–356; these read NPSS…SGSG and PQNS…ENKG. The span at 332–347 shows a compositional bias: basic residues; the sequence is SNRKKKRTSFKRKASK. The region spanning 367–502 is the DAGKc domain; it reads PLMKPLLVFV…DRWNLHVERN (136 aa). ANK repeat units lie at residues 943–972 and 979–1008; these read GHCS…AELL and TGET…SLRQ. Residues 1048 to 1050 carry the PDZ-binding motif; it reads TAV.

It belongs to the eukaryotic diacylglycerol kinase family. As to quaternary structure, interacts (via PDZ-binding motif) with DLG4; controls the localization of DGKI to the synapse. Interacts (via PDZ-binding motif) with DLG1. Interacts (via PDZ-binding motif) with DLG2. Interacts (via PDZ-binding motif) with DLG3. May interact with RASGRP3; involved in the regulation of RASGRP3 activity. In terms of tissue distribution, specifically expressed in brain (at protein level). Expressed in hippocampus, cerebellum, brain stem and spinal cord (at protein level). Highly expressed in hippocampus, cerebellar cortex, olfactory bulb, and olfactory tubercle and to lower extent in the cerebral cortex, caudate putamen, and thalamus. Not detected in the white matter. Also expressed in eye. Major isoform in brain (at protein level). As to expression, minor isoform in brain (at protein level). In terms of tissue distribution, expressed in brain (at protein level).

The protein localises to the cell projection. The protein resides in the axon. It localises to the dendrite. Its subcellular location is the presynapse. It is found in the postsynapse. The protein localises to the postsynaptic density. The protein resides in the synaptic cell membrane. It localises to the cytoplasmic vesicle. Its subcellular location is the secretory vesicle. It is found in the synaptic vesicle membrane. The protein localises to the cytoplasm. The protein resides in the cytosol. It localises to the nucleus. The enzyme catalyses a 1,2-diacyl-sn-glycerol + ATP = a 1,2-diacyl-sn-glycero-3-phosphate + ADP + H(+). It carries out the reaction 1,2-di-(9Z-octadecenoyl)-sn-glycerol + ATP = 1,2-di-(9Z-octadecenoyl)-sn-glycero-3-phosphate + ADP + H(+). The catalysed reaction is 1-octadecanoyl-2-(9Z,12Z)-octadecadienoyl-sn-glycerol + ATP = 1-octadecanoyl-2-(9Z,12Z-octadecadienoyl)-sn-glycero-3-phosphate + ADP + H(+). It catalyses the reaction 1-octadecanoyl-2-(5Z,8Z,11Z,14Z-eicosatetraenoyl)-sn-glycerol + ATP = 1-octadecanoyl-2-(5Z,8Z,11Z,14Z-eicosatetraenoyl)-sn-glycero-3-phosphate + ADP + H(+). Its pathway is lipid metabolism; glycerolipid metabolism. With respect to regulation, activated by phosphatidylserine. Diacylglycerol kinase that converts diacylglycerol/DAG into phosphatidic acid/phosphatidate/PA and regulates the respective levels of these two bioactive lipids. Thereby, acts as a central switch between the signaling pathways activated by these second messengers with different cellular targets and opposite effects in numerous biological processes. Has probably no preference for any of the diacylglycerols in terms of the acyl chain composition, especially for the acyl chain at the sn-2 position. By controlling the diacylglycerol/DAG-mediated activation of RASGRP3, negatively regulates the Rap1 signaling pathway. May play a role in presynaptic diacylglycerol/DAG signaling and control neurotransmitter release during metabotropic glutamate receptor-dependent long-term depression. Functionally, has a decreased affinity for ATP and a reduced diacylglycerol kinase activity. Has no preference for any of the diacylglycerols in terms of the acyl chain composition. Its function is as follows. Has no diacylglycerol kinase activity. The sequence is that of Diacylglycerol kinase iota from Rattus norvegicus (Rat).